The sequence spans 139 residues: MDTIGHHYIVEAAGCDPKVIGDADKIREIFLEAAKRGNMEVKASYFFKFSPMGVSGVVIVAESHISVHTWPEKGYAALDVYTCGEKADPEKAVDYILEQFKAQYAHVSEIKRGIEEDDETFTHTILTWEEKLDRRNGKL.

Ser63 acts as the Schiff-base intermediate with substrate; via pyruvic acid in catalysis. Residue Ser63 is modified to Pyruvic acid (Ser); by autocatalysis. His68 acts as the Proton acceptor; for processing activity in catalysis. Cys83 functions as the Proton donor; for catalytic activity in the catalytic mechanism.

It belongs to the prokaryotic AdoMetDC family. Type 1 subfamily. In terms of assembly, heterotetramer of two alpha and two beta chains arranged as a dimer of alpha/beta heterodimers. It depends on pyruvate as a cofactor. In terms of processing, is synthesized initially as an inactive proenzyme. Formation of the active enzyme involves a self-maturation process in which the active site pyruvoyl group is generated from an internal serine residue via an autocatalytic post-translational modification. Two non-identical subunits are generated from the proenzyme in this reaction, and the pyruvate is formed at the N-terminus of the alpha chain, which is derived from the carboxyl end of the proenzyme. The post-translation cleavage follows an unusual pathway, termed non-hydrolytic serinolysis, in which the side chain hydroxyl group of the serine supplies its oxygen atom to form the C-terminus of the beta chain, while the remainder of the serine residue undergoes an oxidative deamination to produce ammonia and the pyruvoyl group blocking the N-terminus of the alpha chain.

The enzyme catalyses S-adenosyl-L-methionine + H(+) = S-adenosyl 3-(methylsulfanyl)propylamine + CO2. Its pathway is amine and polyamine biosynthesis; S-adenosylmethioninamine biosynthesis; S-adenosylmethioninamine from S-adenosyl-L-methionine: step 1/1. Its function is as follows. Catalyzes the decarboxylation of S-adenosylmethionine to S-adenosylmethioninamine (dcAdoMet), the propylamine donor required for the synthesis of the polyamines spermine and spermidine from the diamine putrescine. The chain is S-adenosylmethionine decarboxylase proenzyme from Pyrococcus abyssi (strain GE5 / Orsay).